The following is a 288-amino-acid chain: Prepilin leader peptidase/N-methyltransferase (288 aa).

The chain crosses the membrane as a helical span at residues F14–Y34. Positions 71, 74, 96, and 99 each coordinate Zn(2+). The next 6 membrane-spanning stretches (helical) occupy residues I103–W123, A127–I147, I158–L178, V182–V202, V227–L247, and M254–W274.

This sequence belongs to the peptidase A24 family. Zn(2+) is required as a cofactor.

Its subcellular location is the cell inner membrane. It catalyses the reaction Typically cleaves a -Gly-|-Phe- bond to release an N-terminal, basic peptide of 5-8 residues from type IV prepilin, and then N-methylates the new N-terminal amino group, the methyl donor being S-adenosyl-L-methionine.. In terms of biological role, plays an essential role in type IV pili and type II pseudopili formation by proteolytically removing the leader sequence from substrate proteins and subsequently monomethylating the alpha-amino group of the newly exposed N-terminal phenylalanine. This Pseudomonas putida (Arthrobacter siderocapsulatus) protein is Prepilin leader peptidase/N-methyltransferase (pilD).